Consider the following 383-residue polypeptide: Putative F-box protein At1g77650 (383 aa).

In terms of domain architecture, F-box spans 1-47 (MAFLSLPSDVVEEFLFKTPIESLVLCKPTCKQLYALCNDKRFIYNHL).

The sequence is that of Putative F-box protein At1g77650 from Arabidopsis thaliana (Mouse-ear cress).